A 212-amino-acid chain; its full sequence is RNA chaperone ProQ (212 aa).

The tract at residues 107–153 is disordered; sequence QDKAKAKRVAQAKSANPAAKTAKKPVKKPVAKRPKQTQSSKPAKEPV. Residues 117 to 126 show a composition bias toward low complexity; that stretch reads QAKSANPAAK. Positions 127 to 141 are enriched in basic residues; that stretch reads TAKKPVKKPVAKRPK.

This sequence belongs to the ProQ family.

The protein localises to the cytoplasm. Its function is as follows. RNA chaperone with significant RNA binding, RNA strand exchange and RNA duplexing activities. In Shewanella halifaxensis (strain HAW-EB4), this protein is RNA chaperone ProQ.